We begin with the raw amino-acid sequence, 440 residues long: 3-phosphoshikimate 1-carboxyvinyltransferase (440 aa).

The 3-phosphoshikimate site is built by Lys-25, Ser-26, and Arg-30. Residue Lys-25 participates in phosphoenolpyruvate binding. Residues Gly-96 and Arg-124 each contribute to the phosphoenolpyruvate site. 3-phosphoshikimate contacts are provided by Ser-168, Gln-169, Asp-310, and Lys-337. Gln-169 provides a ligand contact to phosphoenolpyruvate. Asp-310 functions as the Proton acceptor in the catalytic mechanism. Residues Arg-341, Arg-382, and Lys-409 each coordinate phosphoenolpyruvate.

Belongs to the EPSP synthase family. Monomer.

Its subcellular location is the cytoplasm. The catalysed reaction is 3-phosphoshikimate + phosphoenolpyruvate = 5-O-(1-carboxyvinyl)-3-phosphoshikimate + phosphate. The protein operates within metabolic intermediate biosynthesis; chorismate biosynthesis; chorismate from D-erythrose 4-phosphate and phosphoenolpyruvate: step 6/7. Its function is as follows. Catalyzes the transfer of the enolpyruvyl moiety of phosphoenolpyruvate (PEP) to the 5-hydroxyl of shikimate-3-phosphate (S3P) to produce enolpyruvyl shikimate-3-phosphate and inorganic phosphate. The protein is 3-phosphoshikimate 1-carboxyvinyltransferase of Chlamydia trachomatis serovar D (strain ATCC VR-885 / DSM 19411 / UW-3/Cx).